The chain runs to 338 residues: 1-aminocyclopropane-1-carboxylate deaminase (338 aa).

Position 51 is an N6-(pyridoxal phosphate)lysine (lysine 51). Serine 78 functions as the Nucleophile in the catalytic mechanism.

The protein belongs to the ACC deaminase/D-cysteine desulfhydrase family. Homotrimer. Pyridoxal 5'-phosphate is required as a cofactor.

The enzyme catalyses 1-aminocyclopropane-1-carboxylate + H2O = 2-oxobutanoate + NH4(+). In terms of biological role, catalyzes a cyclopropane ring-opening reaction, the irreversible conversion of 1-aminocyclopropane-1-carboxylate (ACC) to ammonia and alpha-ketobutyrate. Allows growth on ACC as a nitrogen source. In Methylibium petroleiphilum (strain ATCC BAA-1232 / LMG 22953 / PM1), this protein is 1-aminocyclopropane-1-carboxylate deaminase.